We begin with the raw amino-acid sequence, 115 residues long: Large ribosomal subunit protein bL19 (115 aa).

This sequence belongs to the bacterial ribosomal protein bL19 family.

This protein is located at the 30S-50S ribosomal subunit interface and may play a role in the structure and function of the aminoacyl-tRNA binding site. This Alkaliphilus oremlandii (strain OhILAs) (Clostridium oremlandii (strain OhILAs)) protein is Large ribosomal subunit protein bL19.